Consider the following 1031-residue polypeptide: MKSAKSQVNQDQQGENQRALSPLQSTLSSAASPSQAYETYIDNGLICLKHKIRNIEKKKLKLEDYKDRLKNGEQLNPDQLEAVEKYEEVLHNLEFAKELQKTFSALSQDLLKAQKKAQRREHMLKLETEKKKLRTMLQIQYVLQNLTQEHVQKDFKGGLNGAMYLPSKELDYLIKFSKLTCPERNESLSVEDQMEQSSLYFWDLLEGSEKTVVGTTYKHVKDLLSKLLHSGYFESVPVLRNSKEKAEEVLMQSEMKKQLLKSESIKESESLTELVQPEIQPQEFLNRRYMTEVKFSRKQENVEQSWEADYARKPSLLKCWNTLPEPDGQEKKKESLESWKSSLKTQEVSKPVVSLVQGKLRPTLQEEQKQQVPITPVSQWKPESPKSKVGSPQEEQNVQETPKPWVVQSQKEQDPKKLPPGSWAVSVQSEQSGSRSWTTPVCREQASVQPGTPVSWENNAENQKHSLVPQSQISLKSWGAASAGLLPNGQVLTRKLNVEPKDVPKPLPQPIDSSSALPKDPVLRKEKLQDLMSQIQGTYNFMQESVLDFDKPSSAIPSSQPPSACPVSTVSAEQNLSNQSDFLQEPSQASSPVTCSSNACLVTTDQASSGSETEFTTSETPEMVVSPCKPKPASALASPNPPLSKSFQLPPASGSSEAISTAPFQAMQTVFNVNAPLPPRKEQEMKEPPYSSGYNQNFTSSSTQTVSQCQLPAVHIDQTTQPPETGAGYHPDGTVQVSNGSLAFYPAPTSMFPRPAQPFISSRGTLRGCSHGGRLLMSSYQSPGGYKGFDSYRGLPSVSSGNYSQLQLQAREYSGTAYSQRDNFQQCYKRSGTSSGLQANSRAGWSDSSQVSSPERDSETFNSGDSGLGDSRSMTPVDVPVTSPAAAILPVHIYPLPQQMRVAFSAARTSNLAPGTLDQPIVFDLLLNNLGETFDLQLGRFNCPVNGTYVFIFHMLKLAVNVPLYVNLMKNEEVLVSAYANDGAPDHETASNHAVLQLLQGDQIWLRLHRGAIYGSSWKYSTFSGYLLYQD.

Disordered regions lie at residues Met-1–Leu-27, Leu-364–Asn-458, Pro-500–Asp-520, Asp-605–Ala-658, and Arg-830–Pro-876. Polar residues-rich tracts occupy residues Val-425–Thr-439 and Ala-446–Asn-458. A compositionally biased stretch (low complexity) spans Ser-608 to Ser-646. The segment covering Arg-830–Ser-853 has biased composition (polar residues). Phosphoserine occurs at positions 852 and 853. Positions Pro-897–Asp-1031 constitute a C1q domain. Ca(2+)-binding residues include Asp-982 and Glu-988.

This sequence belongs to the caprin family. In terms of assembly, homotrimer; via C1q domain. Found in a complex with LRP6, CCNY and CDK14 during G2/M stage; CAPRIN2 functions as a scaffold for the complex by binding to CCNY via its N terminus and to CDK14 via its C terminus. Interacts with LRP5. Interacts with LRP6. In terms of tissue distribution, specifically expressed in brain (at protein level).

The protein localises to the cytoplasm. It localises to the cell membrane. Its function is as follows. Promotes phosphorylation of the Wnt coreceptor LRP6, leading to increased activity of the canonical Wnt signaling pathway. Facilitates constitutive LRP6 phosphorylation by CDK14/CCNY during G2/M stage of the cell cycle, which may potentiate cells for Wnt signaling. May regulate the transport and translation of mRNAs, modulating for instance the expression of proteins involved in synaptic plasticity in neurons. Involved in regulation of growth as erythroblasts shift from a highly proliferative state towards their terminal phase of differentiation. May be involved in apoptosis. The polypeptide is Caprin-2 (Mus musculus (Mouse)).